A 316-amino-acid polypeptide reads, in one-letter code: 4-hydroxy-3-methylbut-2-enyl diphosphate reductase (316 aa).

A [4Fe-4S] cluster-binding site is contributed by cysteine 12. 2 residues coordinate (2E)-4-hydroxy-3-methylbut-2-enyl diphosphate: histidine 41 and histidine 74. Residues histidine 41 and histidine 74 each contribute to the dimethylallyl diphosphate site. 2 residues coordinate isopentenyl diphosphate: histidine 41 and histidine 74. Cysteine 96 contacts [4Fe-4S] cluster. (2E)-4-hydroxy-3-methylbut-2-enyl diphosphate is bound at residue histidine 124. Dimethylallyl diphosphate is bound at residue histidine 124. An isopentenyl diphosphate-binding site is contributed by histidine 124. Glutamate 126 functions as the Proton donor in the catalytic mechanism. Threonine 167 serves as a coordination point for (2E)-4-hydroxy-3-methylbut-2-enyl diphosphate. Cysteine 197 is a binding site for [4Fe-4S] cluster. Positions 225, 226, 227, and 269 each coordinate (2E)-4-hydroxy-3-methylbut-2-enyl diphosphate. Positions 225, 226, 227, and 269 each coordinate dimethylallyl diphosphate. 4 residues coordinate isopentenyl diphosphate: serine 225, serine 226, asparagine 227, and serine 269.

It belongs to the IspH family. As to quaternary structure, homodimer. [4Fe-4S] cluster is required as a cofactor.

It carries out the reaction isopentenyl diphosphate + 2 oxidized [2Fe-2S]-[ferredoxin] + H2O = (2E)-4-hydroxy-3-methylbut-2-enyl diphosphate + 2 reduced [2Fe-2S]-[ferredoxin] + 2 H(+). The catalysed reaction is dimethylallyl diphosphate + 2 oxidized [2Fe-2S]-[ferredoxin] + H2O = (2E)-4-hydroxy-3-methylbut-2-enyl diphosphate + 2 reduced [2Fe-2S]-[ferredoxin] + 2 H(+). It participates in isoprenoid biosynthesis; dimethylallyl diphosphate biosynthesis; dimethylallyl diphosphate from (2E)-4-hydroxy-3-methylbutenyl diphosphate: step 1/1. It functions in the pathway isoprenoid biosynthesis; isopentenyl diphosphate biosynthesis via DXP pathway; isopentenyl diphosphate from 1-deoxy-D-xylulose 5-phosphate: step 6/6. In terms of biological role, catalyzes the conversion of 1-hydroxy-2-methyl-2-(E)-butenyl 4-diphosphate (HMBPP) into a mixture of isopentenyl diphosphate (IPP) and dimethylallyl diphosphate (DMAPP). Acts in the terminal step of the DOXP/MEP pathway for isoprenoid precursor biosynthesis. This chain is 4-hydroxy-3-methylbut-2-enyl diphosphate reductase, found in Pectobacterium carotovorum subsp. carotovorum (strain PC1).